The following is a 92-amino-acid chain: Small ribosomal subunit protein uS19 (92 aa).

It belongs to the universal ribosomal protein uS19 family.

Functionally, protein S19 forms a complex with S13 that binds strongly to the 16S ribosomal RNA. This chain is Small ribosomal subunit protein uS19, found in Buchnera aphidicola subsp. Baizongia pistaciae (strain Bp).